A 410-amino-acid polypeptide reads, in one-letter code: Probable ATP-dependent RNA helicase MG308 (410 aa).

The region spanning 26 to 179 (VFKLWPFQNI…KKQVINTKVI (154 aa)) is the Helicase ATP-binding domain. 39–46 (AETGSGKT) is an ATP binding site. The short motif at 126–129 (DEID) is the DEID box element. The Helicase C-terminal domain occupies 190–357 (LVKHFVVHLN…DLKFLTENNQ (168 aa)).

The protein belongs to the DEAD box helicase family.

The enzyme catalyses ATP + H2O = ADP + phosphate + H(+). The protein is Probable ATP-dependent RNA helicase MG308 of Mycoplasma genitalium (strain ATCC 33530 / DSM 19775 / NCTC 10195 / G37) (Mycoplasmoides genitalium).